A 352-amino-acid chain; its full sequence is Photosystem II D2 protein (352 aa).

An N-acetylthreonine modification is found at Thr-2. Position 2 is a phosphothreonine (Thr-2). A helical membrane pass occupies residues 40 to 60 (CAYFALGGWLTGTTFVTSWYT). His-117 contacts chlorophyll a. The helical transmembrane segment at 124 to 140 (GFMLRQFEIARSVNLRP) threads the bilayer. The pheophytin a site is built by Gln-129 and Asn-142. The helical transmembrane segment at 152 to 165 (VFVSVFLIYPLGQS) threads the bilayer. Residue His-197 coordinates chlorophyll a. A helical transmembrane segment spans residues 207-227 (AALLCAIHGATVENTLFEDGD). His-214 and Phe-261 together coordinate a plastoquinone. Position 214 (His-214) interacts with Fe cation. Position 268 (His-268) interacts with Fe cation. Residues 278–294 (GLWMSAIGVVGLALNLR) form a helical membrane-spanning segment.

This sequence belongs to the reaction center PufL/M/PsbA/D family. In terms of assembly, PSII is composed of 1 copy each of membrane proteins PsbA, PsbB, PsbC, PsbD, PsbE, PsbF, PsbH, PsbI, PsbJ, PsbK, PsbL, PsbM, PsbT, PsbX, PsbY, PsbZ, Psb30/Ycf12, at least 3 peripheral proteins of the oxygen-evolving complex and a large number of cofactors. It forms dimeric complexes. The D1/D2 heterodimer binds P680, chlorophylls that are the primary electron donor of PSII, and subsequent electron acceptors. It shares a non-heme iron and each subunit binds pheophytin, quinone, additional chlorophylls, carotenoids and lipids. There is also a Cl(-1) ion associated with D1 and D2, which is required for oxygen evolution. The PSII complex binds additional chlorophylls, carotenoids and specific lipids. serves as cofactor. Phosphorylated in vitro.

The protein resides in the plastid. The protein localises to the chloroplast thylakoid membrane. It catalyses the reaction 2 a plastoquinone + 4 hnu + 2 H2O = 2 a plastoquinol + O2. Its function is as follows. Photosystem II (PSII) is a light-driven water:plastoquinone oxidoreductase that uses light energy to abstract electrons from H(2)O, generating O(2) and a proton gradient subsequently used for ATP formation. It consists of a core antenna complex that captures photons, and an electron transfer chain that converts photonic excitation into a charge separation. The D1/D2 (PsbA/PsbD) reaction center heterodimer binds P680, the primary electron donor of PSII as well as several subsequent electron acceptors. D2 is needed for assembly of a stable PSII complex. The sequence is that of Photosystem II D2 protein from Chlamydomonas reinhardtii (Chlamydomonas smithii).